A 1056-amino-acid polypeptide reads, in one-letter code: Carbamoyl phosphate synthase large chain (1056 aa).

The interval 1–397 is carboxyphosphate synthetic domain; the sequence is MPRRTDIKKV…GFKKALRSID (397 aa). Arginine 127, arginine 167, glycine 173, glycine 174, glutamate 206, valine 208, glutamate 213, glycine 239, valine 240, histidine 241, glutamine 282, and glutamate 294 together coordinate ATP. An ATP-grasp 1 domain is found at 131–323; it reads KALMQKIGEP…IARVAAKIAI (193 aa). Residues glutamine 282, glutamate 294, and asparagine 296 each coordinate Mg(2+). Glutamine 282, glutamate 294, and asparagine 296 together coordinate Mn(2+). Residues 398–530 form an oligomerization domain region; the sequence is TDINTHTNHN…YSTHGVTTDI (133 aa). Residues 531-919 form a carbamoyl phosphate synthetic domain region; it reads IQNDKKKVLI…YKACISADNE (389 aa). The region spanning 661–852 is the ATP-grasp 2 domain; that stretch reads SELLDALKIP…LAKVAAKVMI (192 aa). ATP-binding residues include arginine 697, serine 736, leucine 738, glutamate 743, glycine 768, valine 769, histidine 770, serine 771, glutamine 811, and glutamate 823. 3 residues coordinate Mg(2+): glutamine 811, glutamate 823, and asparagine 825. Glutamine 811, glutamate 823, and asparagine 825 together coordinate Mn(2+). Residues 918 to 1056 enclose the MGS-like domain; that stretch reads NELPIEGNVF…PISHYLSEVE (139 aa). Residues 920–1056 are allosteric domain; the sequence is LPIEGNVFIS…PISHYLSEVE (137 aa).

Belongs to the CarB family. In terms of assembly, composed of two chains; the small (or glutamine) chain promotes the hydrolysis of glutamine to ammonia, which is used by the large (or ammonia) chain to synthesize carbamoyl phosphate. Tetramer of heterodimers (alpha,beta)4. Mg(2+) serves as cofactor. Mn(2+) is required as a cofactor.

The enzyme catalyses hydrogencarbonate + L-glutamine + 2 ATP + H2O = carbamoyl phosphate + L-glutamate + 2 ADP + phosphate + 2 H(+). It catalyses the reaction hydrogencarbonate + NH4(+) + 2 ATP = carbamoyl phosphate + 2 ADP + phosphate + 2 H(+). Its pathway is amino-acid biosynthesis; L-arginine biosynthesis; carbamoyl phosphate from bicarbonate: step 1/1. It functions in the pathway pyrimidine metabolism; UMP biosynthesis via de novo pathway; (S)-dihydroorotate from bicarbonate: step 1/3. Large subunit of the glutamine-dependent carbamoyl phosphate synthetase (CPSase). CPSase catalyzes the formation of carbamoyl phosphate from the ammonia moiety of glutamine, carbonate, and phosphate donated by ATP, constituting the first step of 2 biosynthetic pathways, one leading to arginine and/or urea and the other to pyrimidine nucleotides. The large subunit (synthetase) binds the substrates ammonia (free or transferred from glutamine from the small subunit), hydrogencarbonate and ATP and carries out an ATP-coupled ligase reaction, activating hydrogencarbonate by forming carboxy phosphate which reacts with ammonia to form carbamoyl phosphate. This Methanosphaerula palustris (strain ATCC BAA-1556 / DSM 19958 / E1-9c) protein is Carbamoyl phosphate synthase large chain.